Reading from the N-terminus, the 366-residue chain is tRNA/tmRNA (uracil-C(5))-methyltransferase (366 aa).

Positions 190, 218, 223, 239, and 299 each coordinate S-adenosyl-L-methionine. Catalysis depends on C324, which acts as the Nucleophile. E358 serves as the catalytic Proton acceptor.

This sequence belongs to the class I-like SAM-binding methyltransferase superfamily. RNA M5U methyltransferase family. TrmA subfamily.

The enzyme catalyses uridine(54) in tRNA + S-adenosyl-L-methionine = 5-methyluridine(54) in tRNA + S-adenosyl-L-homocysteine + H(+). It catalyses the reaction uridine(341) in tmRNA + S-adenosyl-L-methionine = 5-methyluridine(341) in tmRNA + S-adenosyl-L-homocysteine + H(+). In terms of biological role, dual-specificity methyltransferase that catalyzes the formation of 5-methyluridine at position 54 (m5U54) in all tRNAs, and that of position 341 (m5U341) in tmRNA (transfer-mRNA). This is tRNA/tmRNA (uracil-C(5))-methyltransferase from Escherichia coli O81 (strain ED1a).